A 496-amino-acid polypeptide reads, in one-letter code: Docking protein 3 (496 aa).

Residues 18 to 38 are disordered; it reads LSLDGGTGSGQKGKCEEFPSS. A PH domain is found at 63-179; the sequence is PIKDGILYQQ…WMGPICQLAF (117 aa). Residue Ser-194 is modified to Phosphoserine. Residues 213-317 enclose the IRS-type PTB domain; it reads EVGEFPVVVQ…ARQRERLPEL (105 aa). The disordered stretch occupies residues 313–363; that stretch reads RLPELTRPQPCPLPRATSLPSLDTPGELREMPPGPEPPTSRKMHLAEPGPQ. A phosphoserine mark is found at Ser-330 and Ser-364. Tyr-381 is modified (phosphotyrosine). A disordered region spans residues 408 to 447; sequence PTLHGGEPEPHEGPGSRSPTTSPIYHNGQDLSWPGPANDS. Residue Ser-425 is modified to Phosphoserine.

The protein belongs to the DOK family. Type A subfamily. As to quaternary structure, on tyrosine phosphorylation, interacts with CSK and INPP5D/SHIP1 via their SH2 domains. Both Tyr-381 and Tyr-398 are required for interaction with INPP5D. Only Tyr-381 is required for interaction with CSK. Binds ABL1 through the PTB domain and in a kinase-dependent manner. Does not interact with RasGAP. In terms of processing, constitutively tyrosine-phosphorylated. On IL2 stimulation, phosphorylated on C-terminal tyrosine residues possibly by Src kinases. Can also be phosphorylated by ABL1 kinase. As to expression, expressed in spleen.

The protein localises to the cytoplasm. Its subcellular location is the cell membrane. Its function is as follows. DOK proteins are enzymatically inert adaptor or scaffolding proteins. They provide a docking platform for the assembly of multimolecular signaling complexes. DOK3 is a negative regulator of JNK signaling in B-cells through interaction with INPP5D/SHIP1. May modulate ABL1 function. This is Docking protein 3 (DOK3) from Homo sapiens (Human).